Consider the following 447-residue polypeptide: Cobyrinate a,c-diamide synthase (447 aa).

One can recognise a GATase cobBQ-type domain in the interval 252-439; sequence KIAVAFDESF…AHQHCIGNPY (188 aa). Catalysis depends on C331, which acts as the Nucleophile.

This sequence belongs to the CobB/CbiA family. Requires Mg(2+) as cofactor.

The enzyme catalyses cob(II)yrinate + 2 L-glutamine + 2 ATP + 2 H2O = cob(II)yrinate a,c diamide + 2 L-glutamate + 2 ADP + 2 phosphate + 2 H(+). It carries out the reaction Ni-sirohydrochlorin + 2 L-glutamine + 2 ATP + 2 H2O = Ni-sirohydrochlorin a,c-diamide + 2 L-glutamate + 2 ADP + 2 phosphate + 2 H(+). Its pathway is cofactor biosynthesis; adenosylcobalamin biosynthesis; cob(II)yrinate a,c-diamide from sirohydrochlorin (anaerobic route): step 10/10. In terms of biological role, catalyzes the ATP-dependent amidation of the two carboxylate groups at positions a and c of cobyrinate, using either L-glutamine or ammonia as the nitrogen source. Involved in the biosynthesis of the unique nickel-containing tetrapyrrole coenzyme F430, the prosthetic group of methyl-coenzyme M reductase (MCR), which plays a key role in methanogenesis and anaerobic methane oxidation. Catalyzes the ATP-dependent amidation of the two carboxylate groups at positions a and c of Ni-sirohydrochlorin, using L-glutamine or ammonia as the nitrogen source. The protein is Cobyrinate a,c-diamide synthase of Methanococcus maripaludis (strain C7 / ATCC BAA-1331).